The primary structure comprises 107 residues: Small ribosomal subunit protein uS10c (107 aa).

This sequence belongs to the universal ribosomal protein uS10 family. Part of the 30S ribosomal subunit.

It localises to the plastid. The protein localises to the chloroplast. Functionally, involved in the binding of tRNA to the ribosomes. This chain is Small ribosomal subunit protein uS10c, found in Thalassiosira pseudonana (Marine diatom).